The primary structure comprises 230 residues: Uracil-DNA glycosylase (230 aa).

The active-site Proton acceptor is the aspartate 70.

This sequence belongs to the uracil-DNA glycosylase (UDG) superfamily. UNG family.

The protein resides in the cytoplasm. The enzyme catalyses Hydrolyzes single-stranded DNA or mismatched double-stranded DNA and polynucleotides, releasing free uracil.. Functionally, excises uracil residues from the DNA which can arise as a result of misincorporation of dUMP residues by DNA polymerase or due to deamination of cytosine. In Pseudomonas syringae pv. syringae (strain B728a), this protein is Uracil-DNA glycosylase.